The following is a 122-amino-acid chain: Large ribosomal subunit protein uL14 (122 aa).

It belongs to the universal ribosomal protein uL14 family. In terms of assembly, part of the 50S ribosomal subunit. Forms a cluster with proteins L3 and L19. In the 70S ribosome, L14 and L19 interact and together make contacts with the 16S rRNA in bridges B5 and B8.

Its function is as follows. Binds to 23S rRNA. Forms part of two intersubunit bridges in the 70S ribosome. This is Large ribosomal subunit protein uL14 from Spiroplasma citri.